Reading from the N-terminus, the 539-residue chain is Chaperonin GroEL (539 aa).

Residues 30 to 33 (TLGP), Lys-51, 87 to 91 (DGTTT), Gly-415, 479 to 481 (NAA), and Asp-495 each bind ATP.

It belongs to the chaperonin (HSP60) family. Forms a cylinder of 14 subunits composed of two heptameric rings stacked back-to-back. Interacts with the co-chaperonin GroES.

The protein localises to the cytoplasm. It catalyses the reaction ATP + H2O + a folded polypeptide = ADP + phosphate + an unfolded polypeptide.. Its function is as follows. Together with its co-chaperonin GroES, plays an essential role in assisting protein folding. The GroEL-GroES system forms a nano-cage that allows encapsulation of the non-native substrate proteins and provides a physical environment optimized to promote and accelerate protein folding. The protein is Chaperonin GroEL of Enterobacter agglomerans (Erwinia herbicola).